A 125-amino-acid polypeptide reads, in one-letter code: uncharacterized protein (125 aa).

This sequence belongs to the anhydro-N-acetylmuramic acid kinase family.

This is an uncharacterized protein from Yersinia enterocolitica.